Consider the following 500-residue polypeptide: MSSDKKTAQVVDEVEVALIGAGIMSATLGAMLRELEPSWTQMVFERLDGPALESSSPWNNAGTGHSALCELNYTPEKNGRIDISKALNINEKFQVSRQFWSHQLNNGILTDPKAFINPVPHVSFAQGSIQVDYLKRRFDALKDNHMFPNMQFSDDDATFQEKLPLMSQGRDFNSQKVAISWTDAGTDVNFGALAKQFFTAAKAAGTEIRYGHEVVDIKREGSKWRVVAKNLHTGDYQAVHAKFVFVGAGGYALDLLRKAGVREVSGFAGFPVSGLWLRSKNPELVKQHHAKVYGKAAVGAPPMSVPHLDTRVIDGEEGLLFGPYGGWSPKFLKKGSYLDLFKSIRPDNITSYLGVAAQEFGLTKYLVTEVLKDFDKRVETLKEYVPSADPADWETVIAGQRVQVIKPAGAPQFGSLEFGTTLINNPEGNIAGLLGASPGASITPAIMIELLERCFGENMIQWGDKIQEMIPSYGTKLSKDKKLYNEMWEYTQKTLQLESK.

This sequence belongs to the MQO family. FAD serves as cofactor.

The enzyme catalyses (S)-malate + a quinone = a quinol + oxaloacetate. It functions in the pathway carbohydrate metabolism; tricarboxylic acid cycle; oxaloacetate from (S)-malate (quinone route): step 1/1. The chain is Probable malate:quinone oxidoreductase from Corynebacterium aurimucosum (strain ATCC 700975 / DSM 44827 / CIP 107346 / CN-1) (Corynebacterium nigricans).